Consider the following 228-residue polypeptide: Cytochrome c oxidase subunit 2 (228 aa).

The Mitochondrial intermembrane segment spans residues 1 to 26; the sequence is MRTWSNFNLQNSASPLMEQIIFFHDH. The helical transmembrane segment at 27 to 48 threads the bilayer; the sequence is TLIILIMITILVGYIMINLFFN. Residues 49-62 lie on the Mitochondrial matrix side of the membrane; sequence KFINRFFLVGQMIE. The chain crosses the membrane as a helical span at residues 63 to 82; the sequence is LIWTVLPAITLIFIALPSLR. Over 83–228 the chain is Mitochondrial intermembrane; the sequence is LLYLLDELNN…FINWINNYSY (146 aa). H161, C196, E198, C200, H204, and M207 together coordinate Cu cation. E198 contributes to the Mg(2+) binding site.

Belongs to the cytochrome c oxidase subunit 2 family. As to quaternary structure, component of the cytochrome c oxidase (complex IV, CIV), a multisubunit enzyme composed of a catalytic core of 3 subunits and several supernumerary subunits. The complex exists as a monomer or a dimer and forms supercomplexes (SCs) in the inner mitochondrial membrane with ubiquinol-cytochrome c oxidoreductase (cytochrome b-c1 complex, complex III, CIII). Requires Cu cation as cofactor.

The protein resides in the mitochondrion inner membrane. It catalyses the reaction 4 Fe(II)-[cytochrome c] + O2 + 8 H(+)(in) = 4 Fe(III)-[cytochrome c] + 2 H2O + 4 H(+)(out). Its function is as follows. Component of the cytochrome c oxidase, the last enzyme in the mitochondrial electron transport chain which drives oxidative phosphorylation. The respiratory chain contains 3 multisubunit complexes succinate dehydrogenase (complex II, CII), ubiquinol-cytochrome c oxidoreductase (cytochrome b-c1 complex, complex III, CIII) and cytochrome c oxidase (complex IV, CIV), that cooperate to transfer electrons derived from NADH and succinate to molecular oxygen, creating an electrochemical gradient over the inner membrane that drives transmembrane transport and the ATP synthase. Cytochrome c oxidase is the component of the respiratory chain that catalyzes the reduction of oxygen to water. Electrons originating from reduced cytochrome c in the intermembrane space (IMS) are transferred via the dinuclear copper A center (CU(A)) of subunit 2 and heme A of subunit 1 to the active site in subunit 1, a binuclear center (BNC) formed by heme A3 and copper B (CU(B)). The BNC reduces molecular oxygen to 2 water molecules using 4 electrons from cytochrome c in the IMS and 4 protons from the mitochondrial matrix. The chain is Cytochrome c oxidase subunit 2 (COII) from Galleria mellonella (Greater wax moth).